The sequence spans 187 residues: Large ribosomal subunit protein uL22B (187 aa).

It belongs to the universal ribosomal protein uL22 family. In terms of assembly, component of the large ribosomal subunit (LSU). Mature yeast ribosomes consist of a small (40S) and a large (60S) subunit. The 40S small subunit contains 1 molecule of ribosomal RNA (18S rRNA) and at least 33 different proteins. The large 60S subunit contains 3 rRNA molecules (25S, 5.8S and 5S rRNA) and at least 46 different proteins. uL22 is associated with the polypeptide exit tunnel.

The protein localises to the cytoplasm. In terms of biological role, component of the ribosome, a large ribonucleoprotein complex responsible for the synthesis of proteins in the cell. The small ribosomal subunit (SSU) binds messenger RNAs (mRNAs) and translates the encoded message by selecting cognate aminoacyl-transfer RNA (tRNA) molecules. The large subunit (LSU) contains the ribosomal catalytic site termed the peptidyl transferase center (PTC), which catalyzes the formation of peptide bonds, thereby polymerizing the amino acids delivered by tRNAs into a polypeptide chain. The nascent polypeptides leave the ribosome through a tunnel in the LSU and interact with protein factors that function in enzymatic processing, targeting, and the membrane insertion of nascent chains at the exit of the ribosomal tunnel. This is Large ribosomal subunit protein uL22B (rpl1702) from Schizosaccharomyces pombe (strain 972 / ATCC 24843) (Fission yeast).